The primary structure comprises 97 residues: Putative CC-type chemokine U83 (97 aa).

Cystine bridges form between Cys-32–Cys-62 and Cys-33–Cys-76.

It belongs to the intercrine beta (chemokine CC) family. Highly divergent.

The chain is Putative CC-type chemokine U83 (U83) from Homo sapiens (Human).